The following is a 500-amino-acid chain: Zinc finger and BTB domain-containing protein 34 (500 aa).

One can recognise a BTB domain in the interval 32-96; that stretch reads CDIIVHIQGQ…CYTGRMSLQL (65 aa). The residue at position 164 (serine 164) is a Phosphoserine. Residues 164–209 are disordered; sequence SPPYCSQGRQPTASSDLRMETTPSKALRSRLQEEGHSDRGSSGSVS. Basic and acidic residues predominate over residues 193 to 202; that stretch reads RLQEEGHSDR. Glycyl lysine isopeptide (Lys-Gly) (interchain with G-Cter in SUMO2) cross-links involve residues lysine 235 and lysine 237. A compositionally biased stretch (basic and acidic residues) spans 236 to 245; that stretch reads VKMEKSDRPS. 2 disordered regions span residues 236–256 and 341–360; these read VKME…GDDG and SDSE…RERS. 2 C2H2-type zinc fingers span residues 372-394 and 400-422; these read LICI…MRLH and FVCK…IRGH. Residue lysine 426 forms a Glycyl lysine isopeptide (Lys-Gly) (interchain with G-Cter in SUMO2) linkage. The C2H2-type 3 zinc finger occupies 428-451; sequence FRCEICGKCFPFQGTLNQHLRKNH. Position 463 is a phosphoserine (serine 463). Lysine 474 is covalently cross-linked (Glycyl lysine isopeptide (Lys-Gly) (interchain with G-Cter in SUMO2)). The disordered stretch occupies residues 478–500; the sequence is DASASEMGLDSRMEIHTVSDAPD.

In terms of tissue distribution, expressed in several tissues, including heart, brain, thymus, skeletal muscle, small intestine, testis, kidney, placenta, peripheral blood cells and adult and fetal liver.

It localises to the nucleus. In terms of biological role, may be a transcriptional repressor. This Homo sapiens (Human) protein is Zinc finger and BTB domain-containing protein 34 (ZBTB34).